The sequence spans 429 residues: MREEELIQEEKAANRLDTADPGHRHLFHVPPADGGRYQQAAYLAGNSLGLQPRATRDELFADLEAWRRLGVEGHLAADRPWLPYHELLTAPTARLVGARPAEVVVMNSLTVNLHLLMVSFYRPTGVRTRIVIEDSAFPSDSYAVRSQARFHGLDPDSTVVRLAPRPGEDTLRTADVRDLLAAEGDTIALVLLGGVNYLTGELMEIPEITAAGRAAGAVVGWDLAHAAGNVPLALHDWDVDFAAWCSYKYLNSGPGGLSGVFVHERHLADPTLPRFEGWWSTEAATRFEMSPVARPPATAEAWQVSNPPILAMGPVRTSLEVFDSVGMTALRERSVRLTGYLEWLLDQVTPGRPLAVVTPRDPDRRGAQLSVRIGTGSAAELAKRLRLEHGVVADAREPDVVRFAPVPLYSTYHDCWRVADALAATVEVH.

Pyridoxal 5'-phosphate contacts are provided by residues Leu-109, Thr-110, 137-140 (FPSD), Asp-222, His-225, and Tyr-247. N6-(pyridoxal phosphate)lysine is present on Lys-248. Pyridoxal 5'-phosphate contacts are provided by Trp-278 and Asn-306.

This sequence belongs to the kynureninase family. In terms of assembly, homodimer. Pyridoxal 5'-phosphate is required as a cofactor.

The catalysed reaction is L-kynurenine + H2O = anthranilate + L-alanine + H(+). It catalyses the reaction 3-hydroxy-L-kynurenine + H2O = 3-hydroxyanthranilate + L-alanine + H(+). Its pathway is amino-acid degradation; L-kynurenine degradation; L-alanine and anthranilate from L-kynurenine: step 1/1. It functions in the pathway cofactor biosynthesis; NAD(+) biosynthesis; quinolinate from L-kynurenine: step 2/3. Catalyzes the cleavage of L-kynurenine (L-Kyn) and L-3-hydroxykynurenine (L-3OHKyn) into anthranilic acid (AA) and 3-hydroxyanthranilic acid (3-OHAA), respectively. This is Kynureninase from Salinispora tropica (strain ATCC BAA-916 / DSM 44818 / JCM 13857 / NBRC 105044 / CNB-440).